A 461-amino-acid polypeptide reads, in one-letter code: Nuclear distribution protein PAC1 (461 aa).

Positions 64 to 93 form a coiled coil; the sequence is NSIIRLHRKILDLEQKCQQLTEELEAVPTE. WD repeat units lie at residues 118–157, 161–203, 209–252, 254–292, 318–362, 382–421, and 423–461; these read DVGA…MPLH, AHMK…AFQL, SHEH…KSFQ, HNQW…SMAV, DDQV…FIPH, GHTS…KVWP, and ASHG…VFMR.

This sequence belongs to the WD repeat LIS1/nudF family. Self-associates. Interacts with NDL1 and dynein.

Its subcellular location is the cytoplasm. It localises to the cytoskeleton. The protein resides in the spindle pole. Its function is as follows. Positively regulates the activity of the minus-end directed microtubule motor protein dynein. Plays a central role in positioning the mitotic spindle at the bud neck during cell division. Targets cytoplasmic dynein to microtubule plus ends, thereby promoting dynein-mediated microtubule sliding along the bud cortex and consequently the movement of the mitotic spindle to the bud neck. In Eremothecium gossypii (strain ATCC 10895 / CBS 109.51 / FGSC 9923 / NRRL Y-1056) (Yeast), this protein is Nuclear distribution protein PAC1.